A 405-amino-acid chain; its full sequence is Acetylornithine aminotransferase 1 (405 aa).

Pyridoxal 5'-phosphate contacts are provided by residues 108 to 109 (GA) and Phe141. Arg144 lines the N(2)-acetyl-L-ornithine pocket. Residue 226–229 (DEVQ) coordinates pyridoxal 5'-phosphate. Lys255 carries the N6-(pyridoxal phosphate)lysine modification. Thr283 serves as a coordination point for N(2)-acetyl-L-ornithine. Thr284 lines the pyridoxal 5'-phosphate pocket.

The protein belongs to the class-III pyridoxal-phosphate-dependent aminotransferase family. ArgD subfamily. In terms of assembly, homodimer. Pyridoxal 5'-phosphate serves as cofactor.

Its subcellular location is the cytoplasm. The enzyme catalyses N(2)-acetyl-L-ornithine + 2-oxoglutarate = N-acetyl-L-glutamate 5-semialdehyde + L-glutamate. It participates in amino-acid biosynthesis; L-arginine biosynthesis; N(2)-acetyl-L-ornithine from L-glutamate: step 4/4. This is Acetylornithine aminotransferase 1 from Pseudomonas syringae pv. tomato (strain ATCC BAA-871 / DC3000).